The following is a 236-amino-acid chain: Demethylmenaquinone methyltransferase (236 aa).

Residues Thr58, Asp79, and 106–107 contribute to the S-adenosyl-L-methionine site; that span reads NA.

It belongs to the class I-like SAM-binding methyltransferase superfamily. MenG/UbiE family.

It carries out the reaction a 2-demethylmenaquinol + S-adenosyl-L-methionine = a menaquinol + S-adenosyl-L-homocysteine + H(+). It participates in quinol/quinone metabolism; menaquinone biosynthesis; menaquinol from 1,4-dihydroxy-2-naphthoate: step 2/2. Functionally, methyltransferase required for the conversion of demethylmenaquinol (DMKH2) to menaquinol (MKH2). The polypeptide is Demethylmenaquinone methyltransferase (Alkalihalophilus pseudofirmus (strain ATCC BAA-2126 / JCM 17055 / OF4) (Bacillus pseudofirmus)).